Consider the following 608-residue polypeptide: Albumin 2 (608 aa).

The signal sequence occupies residues 1 to 14; sequence MQWLSVCSLLVLLS. Residues 15–18 constitute a propeptide that is removed on maturation; that stretch reads VLSR. 3 consecutive Albumin domains span residues 19 to 205, 206 to 398, and 402 to 600; these read SQAQ…TFQH, AIAK…AGSD, and KITD…KLVS. 18 disulfide bridges follow: Cys-26–Cys-72, Cys-71–Cys-80, Cys-93–Cys-108, Cys-107–Cys-118, Cys-142–Cys-187, Cys-186–Cys-195, Cys-218–Cys-264, Cys-263–Cys-271, Cys-283–Cys-299, Cys-298–Cys-309, Cys-336–Cys-381, Cys-380–Cys-389, Cys-414–Cys-460, Cys-459–Cys-471, Cys-484–Cys-500, Cys-499–Cys-510, Cys-537–Cys-582, and Cys-581–Cys-590. N-linked (GlcNAc...) asparagine glycosylation occurs at Asn-501.

It belongs to the ALB/AFP/VDB family. In terms of tissue distribution, plasma.

It localises to the secreted. Binds water, Ca(2+), Na(+), K(+), fatty acids, hormones, bilirubin and drugs. Its main function is the regulation of the colloidal osmotic pressure of blood. The chain is Albumin 2 (alb2) from Salmo salar (Atlantic salmon).